Here is a 310-residue protein sequence, read N- to C-terminus: Ribose-phosphate pyrophosphokinase (310 aa).

ATP is bound by residues 33–35 (DGE) and 92–93 (RQ). H127 and D166 together coordinate Mg(2+). K189 is a catalytic residue. D-ribose 5-phosphate contacts are provided by residues R191, D215, and 219–223 (DTAGT).

It belongs to the ribose-phosphate pyrophosphokinase family. Class I subfamily. Homohexamer. The cofactor is Mg(2+).

Its subcellular location is the cytoplasm. It catalyses the reaction D-ribose 5-phosphate + ATP = 5-phospho-alpha-D-ribose 1-diphosphate + AMP + H(+). The protein operates within metabolic intermediate biosynthesis; 5-phospho-alpha-D-ribose 1-diphosphate biosynthesis; 5-phospho-alpha-D-ribose 1-diphosphate from D-ribose 5-phosphate (route I): step 1/1. In terms of biological role, involved in the biosynthesis of the central metabolite phospho-alpha-D-ribosyl-1-pyrophosphate (PRPP) via the transfer of pyrophosphoryl group from ATP to 1-hydroxyl of ribose-5-phosphate (Rib-5-P). In Bordetella parapertussis (strain 12822 / ATCC BAA-587 / NCTC 13253), this protein is Ribose-phosphate pyrophosphokinase.